We begin with the raw amino-acid sequence, 241 residues long: Protein GrpE (241 aa).

The segment covering 28-49 (QNCQKEETQTTNKDNQKEDETF) has biased composition (basic and acidic residues). Positions 28–78 (QNCQKEETQTTNKDNQKEDETFKNQPNKTKQTNTKQQKHLSKESSHQQITK) are disordered. A compositionally biased stretch (low complexity) spans 50–62 (KNQPNKTKQTNTK).

This sequence belongs to the GrpE family. In terms of assembly, homodimer.

The protein localises to the cytoplasm. Functionally, participates actively in the response to hyperosmotic and heat shock by preventing the aggregation of stress-denatured proteins, in association with DnaK and GrpE. It is the nucleotide exchange factor for DnaK and may function as a thermosensor. Unfolded proteins bind initially to DnaJ; upon interaction with the DnaJ-bound protein, DnaK hydrolyzes its bound ATP, resulting in the formation of a stable complex. GrpE releases ADP from DnaK; ATP binding to DnaK triggers the release of the substrate protein, thus completing the reaction cycle. Several rounds of ATP-dependent interactions between DnaJ, DnaK and GrpE are required for fully efficient folding. This chain is Protein GrpE, found in Aster yellows witches'-broom phytoplasma (strain AYWB).